A 1013-amino-acid polypeptide reads, in one-letter code: Ephrin type-A receptor 5 (1013 aa).

A signal peptide spans 1-31 (MGLRGGGGRAGGPAPGWTCLLLCAALRSLLA). Residues 32 to 549 (SPGSEVNLLD…AASSDQSQIP (518 aa)) lie on the Extracellular side of the membrane. The region spanning 36–214 (EVNLLDSRTV…YYKKCPSVIR (179 aa)) is the Eph LBD domain. 6 N-linked (GlcNAc...) asparagine glycosylation sites follow: Asn240, Asn275, Asn345, Asn399, Asn412, and Asn437. Fibronectin type-III domains lie at 333–443 (PPSA…TNQA) and 444–538 (APSP…TSPV). The helical transmembrane segment at 550–570 (IIVVSVTVGVILLAVVIGFLL) threads the bilayer. At 571 to 1013 (SGSCCDHGCG…VQLVNGMVPL (443 aa)) the chain is on the cytoplasmic side. Phosphotyrosine; by autocatalysis occurs at positions 626 and 632. In terms of domain architecture, Protein kinase spans 651-912 (ITIERVIGAG…EIVSMLDKLI (262 aa)). Residues 657–665 (IGAGEFGEV) and Lys683 contribute to the ATP site. Asp776 functions as the Proton acceptor in the catalytic mechanism. 2 positions are modified to phosphotyrosine; by autocatalysis: Tyr809 and Tyr958. Residues 941-1013 (GAYRSVGEWL…VQLVNGMVPL (73 aa)) enclose the SAM domain. A PDZ-binding motif is present at residues 1011–1013 (VPL).

The protein belongs to the protein kinase superfamily. Tyr protein kinase family. Ephrin receptor subfamily. Heterotetramer upon binding of the ligand. The heterotetramer is composed of an ephrin dimer and a receptor dimer. Oligomerization is probably required to induce biological responses. Post-translationally, phosphorylated. Phosphorylation is stimulated by the ligand EFNA5. Detected in the 10-day embryonic brain, weaker expression in the rest of the 10-day embryo. Undetected in adult tissues.

It is found in the cell membrane. The protein resides in the cell projection. It localises to the axon. The protein localises to the dendrite. The catalysed reaction is L-tyrosyl-[protein] + ATP = O-phospho-L-tyrosyl-[protein] + ADP + H(+). In terms of biological role, receptor tyrosine kinase which binds promiscuously GPI-anchored ephrin-A family ligands residing on adjacent cells, leading to contact-dependent bidirectional signaling into neighboring cells. The signaling pathway downstream of the receptor is referred to as forward signaling while the signaling pathway downstream of the ephrin ligand is referred to as reverse signaling. Among GPI-anchored ephrin-A ligands, EFNA5 most probably constitutes the cognate/functional ligand for EPHA5. Functions as an axon guidance molecule during development and may be involved in the development of the retinotectal, entorhino-hippocampal and hippocamposeptal pathways. Together with EFNA5 plays also a role in synaptic plasticity in adult brain through regulation of synaptogenesis. The sequence is that of Ephrin type-A receptor 5 (EPHA5) from Gallus gallus (Chicken).